The chain runs to 110 residues: MRQVTIPLIQSKSMFCVIYRSSKRDQTYLYVEKKDDFSRVPEALMKGFGQPQLAMILPLDGRKKLVNAELEKVKQALREQGYYLQLPPPPEDLLKQHLSTVGQNTSHADR.

The YcgL domain maps to 14–98 (MFCVIYRSSK…PPEDLLKQHL (85 aa)).

In Salmonella arizonae (strain ATCC BAA-731 / CDC346-86 / RSK2980), this protein is Protein YcgL.